The following is a 498-amino-acid chain: L-ornithine N(5)-monooxygenase (498 aa).

Residues 80 to 88 and Gln99 each bind FAD; that span reads ERQKQFAWH. Substrate is bound at residue Lys104. Val165 contributes to the FAD binding site. NADP(+) contacts are provided by residues 251 to 254 and Arg276; that span reads SGQS. Substrate contacts are provided by residues 290–293 and Asn320; that span reads NEVF. 320 to 322 lines the NADP(+) pocket; that stretch reads NYS. 463–465 lines the FAD pocket; the sequence is SLL. Position 466 (Ser466) interacts with substrate.

Belongs to the lysine N(6)-hydroxylase/L-ornithine N(5)-oxygenase family. In terms of assembly, homotetramer. The cofactor is FAD.

It catalyses the reaction L-ornithine + NADPH + O2 = N(5)-hydroxy-L-ornithine + NADP(+) + H2O. The enzyme catalyses L-ornithine + NADH + O2 = N(5)-hydroxy-L-ornithine + NAD(+) + H2O. The protein operates within siderophore biosynthesis. Catalyzes the conversion of L-ornithine to N(5)-hydroxyornithine, the first step in the biosynthesis of all hydroxamate-containing siderophores, such as the secreted triacetylfusarinine C (TAFC) involved in iron uptake and the intracellular iron storage compound desferriferricrocin (DFFC). This Emericella nidulans (strain FGSC A4 / ATCC 38163 / CBS 112.46 / NRRL 194 / M139) (Aspergillus nidulans) protein is L-ornithine N(5)-monooxygenase.